We begin with the raw amino-acid sequence, 169 residues long: MKTFIVITFIGILSYAYADECENPEPMQGFSASQFYQGXWYVTHETSAXTLSECNILTTSNDNGKFTVKHKYTKDGXVGELICEGQASANNKFTYDCKFXGZTMEQVTRTAMDTDYNDYALYYLCTTYKXGPNAGKKEGHYILSRRQPNTEIPDALKTKTKDLNLKLCG.

The signal sequence occupies residues 1 to 18 (MKTFIVITFIGILSYAYA). Intrachain disulfides connect Cys-21-Cys-125, Cys-54-Cys-168, and Cys-83-Cys-97.

This sequence belongs to the calycin superfamily. Triabin family. In terms of tissue distribution, expressed in salivary glands.

The protein resides in the secreted. The chain is Procalin from Hospesneotomae protracta (Western bloodsucking conenose).